Consider the following 81-residue polypeptide: UPF0386 protein Smed_0945 (81 aa).

The protein belongs to the UPF0386 family.

The polypeptide is UPF0386 protein Smed_0945 (Sinorhizobium medicae (strain WSM419) (Ensifer medicae)).